The following is a 518-amino-acid chain: Myosin-binding protein 7 (518 aa).

One can recognise a GTD-binding domain in the interval 69-167; that stretch reads NELELLRETV…ALTFEAQAYK (99 aa). The interval 276-350 is disordered; sequence VVGQSPRHQR…DSSEIGDNDM (75 aa). A compositionally biased stretch (low complexity) spans 291–301; that stretch reads STGSASSLLGT. The span at 310 to 320 shows a compositional bias: polar residues; it reads SNDSPRSNNGS. Serine 385 is modified (phosphoserine). The stretch at 399–431 forms a coiled coil; sequence EISKLYMRLQALEADRESMRQAIMSMRTEKAQM. A helical transmembrane segment spans residues 458 to 477; the sequence is IIGAFNFISVFKWITSFVFW.

Interacts with myosin XI-I.

It is found in the endomembrane system. Its function is as follows. Membrane-anchored myosin receptors that define a distinct, plant-specific transport vesicle compartment. The chain is Myosin-binding protein 7 from Arabidopsis thaliana (Mouse-ear cress).